We begin with the raw amino-acid sequence, 152 residues long: Synaptobrevin (152 aa).

The span at 1-16 (MENNEAPSPSGSNNND) shows a compositional bias: polar residues. Residues 1–30 (MENNEAPSPSGSNNNDFPILPPPPNANDNY) form a disordered region. Residues 1-110 (MENNEAPSPS…KRKQWWANMK (110 aa)) lie on the Cytoplasmic side of the membrane. Residues 47 to 107 (KLQQTQAKVD…GKLKRKQWWA (61 aa)) form the v-SNARE coiled-coil homology domain. A helical; Anchor for type IV membrane protein membrane pass occupies residues 111–130 (MMIILGVIAVVLLIIVLVSV). Residues 131–152 (WPSSSDSGSGGGNKAITQAPPH) lie on the Vesicular side of the membrane. The disordered stretch occupies residues 133-152 (SSSDSGSGGGNKAITQAPPH).

It belongs to the synaptobrevin family. As to quaternary structure, part of the SNARE core complex containing Snap25 and syntaxin. Post-translationally, ubiquitinated by gzl, regulating endocytic trafficking. In wing imaginal disks, ubiquitination by gzl promotes transcytosis of wingless (wg) to the basolateral surface. As to expression, not nervous system-specific; abundant in cells of the gut and Malpighian tubules.

The protein localises to the cytoplasmic vesicle. The protein resides in the secretory vesicle. It is found in the synaptic vesicle membrane. It localises to the cell membrane. Its function is as follows. Involved in the targeting and/or fusion of transport vesicles to their target membrane. This chain is Synaptobrevin, found in Drosophila melanogaster (Fruit fly).